We begin with the raw amino-acid sequence, 181 residues long: ATP-dependent protease subunit HslV (181 aa).

The active site involves T7. Positions 166, 169, and 172 each coordinate Na(+).

It belongs to the peptidase T1B family. HslV subfamily. A double ring-shaped homohexamer of HslV is capped on each side by a ring-shaped HslU homohexamer. The assembly of the HslU/HslV complex is dependent on binding of ATP.

The protein resides in the cytoplasm. The enzyme catalyses ATP-dependent cleavage of peptide bonds with broad specificity.. Its activity is regulated as follows. Allosterically activated by HslU binding. In terms of biological role, protease subunit of a proteasome-like degradation complex believed to be a general protein degrading machinery. This chain is ATP-dependent protease subunit HslV, found in Delftia acidovorans (strain DSM 14801 / SPH-1).